Consider the following 431-residue polypeptide: Probable glucarate dehydratase (431 aa).

Substrate contacts are provided by H29, T108, Y153, and K198. Catalysis depends on K200, which acts as the Proton acceptor. 2 residues coordinate Mg(2+): D228 and N276. Residues 228 to 230 (DPN), N276, 327 to 329 (HSN), H356, and R410 contribute to the substrate site. H327 serves as the catalytic Proton acceptor.

Belongs to the mandelate racemase/muconate lactonizing enzyme family. GlucD subfamily. Requires Mg(2+) as cofactor.

The catalysed reaction is D-glucarate = 5-dehydro-4-deoxy-D-glucarate + H2O. The protein operates within carbohydrate acid metabolism; D-glucarate degradation; 2,5-dioxopentanoate from D-glucarate: step 1/2. In terms of biological role, catalyzes the dehydration of glucarate to 5-keto-4-deoxy-D-glucarate (5-kdGluc). The sequence is that of Probable glucarate dehydratase (gudD) from Streptomyces coelicolor (strain ATCC BAA-471 / A3(2) / M145).